A 282-amino-acid chain; its full sequence is uncharacterized protein (282 aa).

The HTH rpiR-type domain maps to 2-78; that stretch reads TDVLAVIREM…IKIAVSLAKQ (77 aa). A DNA-binding region (H-T-H motif) is located at residues 38–57; it reads VNELANACDTSEASIIRFCR. The 141-residue stretch at 122-262 folds into the SIS domain; sequence AAEALANANK…FILVAQKKYN (141 aa).

This is an uncharacterized protein from Caldanaerobacter subterraneus subsp. tengcongensis (strain DSM 15242 / JCM 11007 / NBRC 100824 / MB4) (Thermoanaerobacter tengcongensis).